Reading from the N-terminus, the 785-residue chain is Cadherin-7 (785 aa).

Positions 1–27 (MKLGKVEFCHFLQLIALFLCFSGMSQA) are cleaved as a signal peptide. A propeptide spanning residues 28 to 47 (ELSRSRSKPYFQSGRSRTKR) is cleaved from the precursor. The Extracellular segment spans residues 28 to 607 (ELSRSRSKPY…AYVLPAGLST (580 aa)). Cadherin domains follow at residues 49–153 (WVWN…EPKF), 154–262 (LDGP…PPRF), 263–377 (PRRS…PPVF), 378–482 (SSPL…APEF), and 482–599 (FAMD…AEAY). Residues Asn449 and Asn530 are each glycosylated (N-linked (GlcNAc...) asparagine). The helical transmembrane segment at 608-628 (GALIAILACVLTLLVLILLIV) threads the bilayer. At 629-785 (TMRRRKKEPL…YGTGQESLYS (157 aa)) the chain is on the cytoplasmic side.

The protein localises to the cell membrane. In terms of biological role, cadherins are calcium-dependent cell adhesion proteins. They preferentially interact with themselves in a homophilic manner in connecting cells; cadherins may thus contribute to the sorting of heterogeneous cell types. The polypeptide is Cadherin-7 (CDH7) (Homo sapiens (Human)).